A 1159-amino-acid polypeptide reads, in one-letter code: ATP-dependent helicase/deoxyribonuclease subunit B (1159 aa).

8–15 (GRAGSGKT) contributes to the ATP binding site. The [4Fe-4S] cluster site is built by cysteine 784, cysteine 1102, cysteine 1105, and cysteine 1111. The tract at residues 1140 to 1159 (VKEDGSQVDGRTEGSDNNEG) is disordered.

This sequence belongs to the helicase family. AddB/RexB type 1 subfamily. As to quaternary structure, heterodimer of AddA and AddB. Requires Mg(2+) as cofactor. The cofactor is [4Fe-4S] cluster.

The heterodimer acts as both an ATP-dependent DNA helicase and an ATP-dependent, dual-direction single-stranded exonuclease. Recognizes the chi site generating a DNA molecule suitable for the initiation of homologous recombination. The AddB subunit has 5' -&gt; 3' nuclease activity but not helicase activity. In Caldanaerobacter subterraneus subsp. tengcongensis (strain DSM 15242 / JCM 11007 / NBRC 100824 / MB4) (Thermoanaerobacter tengcongensis), this protein is ATP-dependent helicase/deoxyribonuclease subunit B.